The sequence spans 333 residues: Phosphate acyltransferase (333 aa).

This sequence belongs to the PlsX family. As to quaternary structure, homodimer. Probably interacts with PlsY.

The protein localises to the cytoplasm. The catalysed reaction is a fatty acyl-[ACP] + phosphate = an acyl phosphate + holo-[ACP]. Its pathway is lipid metabolism; phospholipid metabolism. In terms of biological role, catalyzes the reversible formation of acyl-phosphate (acyl-PO(4)) from acyl-[acyl-carrier-protein] (acyl-ACP). This enzyme utilizes acyl-ACP as fatty acyl donor, but not acyl-CoA. This is Phosphate acyltransferase from Lactobacillus johnsonii (strain CNCM I-12250 / La1 / NCC 533).